Reading from the N-terminus, the 421-residue chain is Imidazolonepropionase (421 aa).

Residues H81 and H83 each contribute to the Fe(3+) site. H81 and H83 together coordinate Zn(2+). The 4-imidazolone-5-propanoate site is built by R90, Y153, and H186. N-formimidoyl-L-glutamate is bound at residue Y153. H251 provides a ligand contact to Fe(3+). H251 is a Zn(2+) binding site. E254 lines the 4-imidazolone-5-propanoate pocket. A Fe(3+)-binding site is contributed by D326. D326 contacts Zn(2+). N-formimidoyl-L-glutamate-binding residues include N328 and G330. Residue S331 participates in 4-imidazolone-5-propanoate binding.

It belongs to the metallo-dependent hydrolases superfamily. HutI family. Zn(2+) is required as a cofactor. It depends on Fe(3+) as a cofactor.

The protein resides in the cytoplasm. It catalyses the reaction 4-imidazolone-5-propanoate + H2O = N-formimidoyl-L-glutamate. Its pathway is amino-acid degradation; L-histidine degradation into L-glutamate; N-formimidoyl-L-glutamate from L-histidine: step 3/3. Functionally, catalyzes the hydrolytic cleavage of the carbon-nitrogen bond in imidazolone-5-propanoate to yield N-formimidoyl-L-glutamate. It is the third step in the universal histidine degradation pathway. This is Imidazolonepropionase from Streptococcus pyogenes serotype M28 (strain MGAS6180).